The following is a 527-amino-acid chain: Amine oxidase [flavin-containing] A (527 aa).

M1 carries the N-acetylmethionine modification. Residues 1 to 497 (MASREKTSIE…HTFWERNLPS (497 aa)) lie on the Cytoplasmic side of the membrane. Residue S383 is modified to Phosphoserine. An S-8alpha-FAD cysteine modification is found at C406. A helical; Anchor for type IV membrane protein transmembrane segment spans residues 498–518 (VTGLLKLIGFTTSVTALWIVA). Over 519 to 527 (YKFRLLRRS) the chain is Mitochondrial intermembrane. The segment at 520 to 522 (KFR) is interaction with membrane phospholipid headgroups.

This sequence belongs to the flavin monoamine oxidase family. As to quaternary structure, monomer, homo- or heterodimer (containing two subunits of similar size). Each subunit contains a covalently bound flavin. Enzymatically active as monomer. FAD serves as cofactor.

It is found in the mitochondrion outer membrane. It carries out the reaction a secondary aliphatic amine + O2 + H2O = a primary amine + an aldehyde + H2O2. The enzyme catalyses a primary methyl amine + O2 + H2O = an aldehyde + H2O2 + NH4(+). The catalysed reaction is (R)-adrenaline + O2 + H2O = (R)-3,4-dihydroxymandelaldehyde + methylamine + H2O2. It catalyses the reaction dopamine + O2 + H2O = 3,4-dihydroxyphenylacetaldehyde + H2O2 + NH4(+). It carries out the reaction tyramine + O2 + H2O = (4-hydroxyphenyl)acetaldehyde + H2O2 + NH4(+). The enzyme catalyses (R)-noradrenaline + O2 + H2O = (R)-3,4-dihydroxymandelaldehyde + H2O2 + NH4(+). The catalysed reaction is serotonin + O2 + H2O = (5-hydroxyindol-3-yl)acetaldehyde + H2O2 + NH4(+). It catalyses the reaction kynuramine + O2 + H2O = 3-(2-aminophenyl)-3-oxopropanal + H2O2 + NH4(+). It carries out the reaction tryptamine + O2 + H2O = indole-3-acetaldehyde + H2O2 + NH4(+). The enzyme catalyses 2-phenylethylamine + O2 + H2O = 2-phenylacetaldehyde + H2O2 + NH4(+). In terms of biological role, catalyzes the oxidative deamination of primary and some secondary amine such as neurotransmitters, with concomitant reduction of oxygen to hydrogen peroxide and has important functions in the metabolism of neuroactive and vasoactive amines in the central nervous system and peripheral tissues. Preferentially oxidizes serotonin. Also catalyzes the oxidative deamination of kynuramine to 3-(2-aminophenyl)-3-oxopropanal that can spontaneously condense to 4-hydroxyquinoline. This Canis lupus familiaris (Dog) protein is Amine oxidase [flavin-containing] A.